Consider the following 123-residue polypeptide: WAP four-disulfide core domain protein 5 (123 aa).

Residues 1-24 form the signal peptide; that stretch reads MRIQSLLLLGALLAVGSQPPAAFG. WAP domains lie at 27–73 and 74–121; these read KGEK…CVPR and VSVK…RDPV. Disulfide bonds link cysteine 34/cysteine 62, cysteine 41/cysteine 66, cysteine 49/cysteine 61, cysteine 55/cysteine 70, cysteine 81/cysteine 109, cysteine 88/cysteine 113, cysteine 96/cysteine 108, and cysteine 102/cysteine 117.

It localises to the secreted. Putative acid-stable proteinase inhibitor. This is WAP four-disulfide core domain protein 5 (WFDC5) from Aotus nancymaae (Ma's night monkey).